We begin with the raw amino-acid sequence, 153 residues long: Ribosome maturation factor RimP (153 aa).

It belongs to the RimP family.

Its subcellular location is the cytoplasm. Required for maturation of 30S ribosomal subunits. This is Ribosome maturation factor RimP from Burkholderia mallei (strain NCTC 10229).